A 424-amino-acid polypeptide reads, in one-letter code: Probable methyltransferase EP424R (424 aa).

The region spanning 104 to 316 (QIVTNAWLKM…TYIVGKNRLR (213 aa)) is the Adrift-type SAM-dependent 2'-O-MTase domain. Residues G136 and D229 each contribute to the S-adenosyl-L-methionine site. Catalysis depends on K269, which acts as the Proton acceptor.

The protein resides in the virion. The polypeptide is Probable methyltransferase EP424R (African swine fever virus (strain Badajoz 1971 Vero-adapted) (Ba71V)).